The sequence spans 142 residues: Transcriptional regulator MraZ (142 aa).

2 SpoVT-AbrB domains span residues 5–51 (ASAL…PRPE) and 77–120 (AADV…DAAT).

Belongs to the MraZ family. As to quaternary structure, forms oligomers.

It is found in the cytoplasm. Its subcellular location is the nucleoid. This Cupriavidus pinatubonensis (strain JMP 134 / LMG 1197) (Cupriavidus necator (strain JMP 134)) protein is Transcriptional regulator MraZ.